The chain runs to 181 residues: Ribulose bisphosphate carboxylase small subunit, chloroplastic 1 (181 aa).

Residues 1–54 (MASSMLSSAAVVTSPAQATMVAPFTGLKSSSAFPVTRKANNDITSIVSNGGRVS) constitute a chloroplast transit peptide.

This sequence belongs to the RuBisCO small chain family. As to quaternary structure, heterohexadecamer of 8 large and 8 small subunits.

The protein resides in the plastid. The protein localises to the chloroplast. Functionally, ruBisCO catalyzes two reactions: the carboxylation of D-ribulose 1,5-bisphosphate, the primary event in carbon dioxide fixation, as well as the oxidative fragmentation of the pentose substrate. Both reactions occur simultaneously and in competition at the same active site. Although the small subunit is not catalytic it is essential for maximal activity. The polypeptide is Ribulose bisphosphate carboxylase small subunit, chloroplastic 1 (Brassica napus (Rape)).